Consider the following 435-residue polypeptide: Adenylosuccinate synthetase (435 aa).

GTP contacts are provided by residues 11-17 (GDEGKGK) and 39-41 (GHT). The active-site Proton acceptor is the Asp-12. Asp-12 and Gly-39 together coordinate Mg(2+). IMP-binding positions include 12 to 15 (DEGK), 37 to 40 (NAGH), Thr-128, Arg-142, Gln-223, Thr-238, and Arg-302. His-40 acts as the Proton donor in catalysis. Substrate is bound at residue 298–304 (SVTGRPR). GTP is bound by residues Arg-304, 330–332 (KLD), and 412–414 (STG).

The protein belongs to the adenylosuccinate synthetase family. As to quaternary structure, homodimer. It depends on Mg(2+) as a cofactor.

It localises to the cytoplasm. It carries out the reaction IMP + L-aspartate + GTP = N(6)-(1,2-dicarboxyethyl)-AMP + GDP + phosphate + 2 H(+). It functions in the pathway purine metabolism; AMP biosynthesis via de novo pathway; AMP from IMP: step 1/2. Plays an important role in the de novo pathway of purine nucleotide biosynthesis. Catalyzes the first committed step in the biosynthesis of AMP from IMP. This is Adenylosuccinate synthetase from Coxiella burnetii (strain RSA 493 / Nine Mile phase I).